Here is a 374-residue protein sequence, read N- to C-terminus: Proteinase-activated receptor 3 (374 aa).

The signal sequence occupies residues 1–21 (MKALIFAAAGLLLLLPTFCQS). A propeptide spans 22–38 (GMENDTNNLAKPTLPIK) (removed for receptor activation). Asn25 and Asn82 each carry an N-linked (GlcNAc...) asparagine glycan. Residues 39–94 (TFRGAPPNSFEEFPFSALEGWTGATITVKIKCPEESASHLHVKNATMGYLTSSLST) are Extracellular-facing. The chain crosses the membrane as a helical span at residues 95 to 120 (KLIPAIYLLVFVVGVPANAVTLWMLF). Over 121–128 (FRTRSICT) the chain is Cytoplasmic. Residues 129 to 148 (TVFYTNLAIADFLFCVTLPF) traverse the membrane as a helical segment. Residues 149 to 167 (KIAYHLNGNNWVFGEVLCR) lie on the Extracellular side of the membrane. Cys166 and Cys245 are disulfide-bonded. Residues 168–189 (ATTVIFYGNMYCSILLLACISI) form a helical membrane-spanning segment. Topologically, residues 190–206 (NRYLAIVHPFTYRGLPK) are cytoplasmic. The helical transmembrane segment at 207-230 (HTYALVTCGLVWATVFLYMLPFFI) threads the bilayer. Residues 231-260 (LKQEYYLVQPDITTCHDVHNTCESSSPFQL) are Extracellular-facing. A helical transmembrane segment spans residues 261–280 (YYFISLAFFGFLIPFVLIIY). Over 281–297 (CYAAIIRTLNAYDHRWL) the chain is Cytoplasmic. The helical transmembrane segment at 298 to 322 (WYVKASLLILVIFTICFAPSNIILI) threads the bilayer. The Extracellular portion of the chain corresponds to 323-336 (IHHANYYYNNTDGL). Asn331 carries an N-linked (GlcNAc...) asparagine glycan. A helical membrane pass occupies residues 337 to 361 (YFIYLIALCLGSLNSCLDPFLYFLM). Over 362–374 (SKTRNHSTAYLTK) the chain is Cytoplasmic.

The protein belongs to the G-protein coupled receptor 1 family. In terms of assembly, interacts with INSC/inscuteable and probably GPSM2. Post-translationally, a proteolytic cleavage generates a new N-terminus that functions as a tethered ligand. Highest expression in the megakaryocytes of the bone marrow, lower in mature megakaryocytes, in platelets and in a variety of other tissues such as heart and gut.

The protein localises to the cell membrane. Functionally, receptor for activated thrombin coupled to G proteins that stimulate phosphoinositide hydrolysis. This chain is Proteinase-activated receptor 3 (F2RL2), found in Homo sapiens (Human).